We begin with the raw amino-acid sequence, 360 residues long: Histidinol-phosphate aminotransferase (360 aa).

The residue at position 223 (lysine 223) is an N6-(pyridoxal phosphate)lysine.

It belongs to the class-II pyridoxal-phosphate-dependent aminotransferase family. Histidinol-phosphate aminotransferase subfamily. Homodimer. Requires pyridoxal 5'-phosphate as cofactor.

It catalyses the reaction L-histidinol phosphate + 2-oxoglutarate = 3-(imidazol-4-yl)-2-oxopropyl phosphate + L-glutamate. Its pathway is amino-acid biosynthesis; L-histidine biosynthesis; L-histidine from 5-phospho-alpha-D-ribose 1-diphosphate: step 7/9. The sequence is that of Histidinol-phosphate aminotransferase from Bacillus velezensis (strain DSM 23117 / BGSC 10A6 / LMG 26770 / FZB42) (Bacillus amyloliquefaciens subsp. plantarum).